Here is a 36-residue protein sequence, read N- to C-terminus: Neuropeptide F (36 aa).

Phe-36 carries the phenylalanine amide modification.

Belongs to the NPY family. In terms of tissue distribution, central and peripheral nervous system, and muscular pharynx.

It localises to the secreted. Its function is as follows. May perform an important neurotransmitter function and may regulate muscular activity. This is Neuropeptide F from Arthurdendyus triangulatus (New Zealand flatworm).